The following is a 102-amino-acid chain: MAKGQSLQDPFLNALRRERVPVSIYLVNGIKLQGQIESFDQFVILLKNTVSQMVYKHAISTVVPSRPVSHHSNNAGGGTSSNYHHGSSAQGTSAQQDSEETE.

One can recognise a Sm domain in the interval 9–68; that stretch reads DPFLNALRRERVPVSIYLVNGIKLQGQIESFDQFVILLKNTVSQMVYKHAISTVVPSRPV. The interval 63-102 is disordered; sequence VPSRPVSHHSNNAGGGTSSNYHHGSSAQGTSAQQDSEETE. A compositionally biased stretch (polar residues) spans 70-96; that stretch reads HHSNNAGGGTSSNYHHGSSAQGTSAQQ.

This sequence belongs to the Hfq family. Homohexamer.

Functionally, RNA chaperone that binds small regulatory RNA (sRNAs) and mRNAs to facilitate mRNA translational regulation in response to envelope stress, environmental stress and changes in metabolite concentrations. Also binds with high specificity to tRNAs. The protein is RNA-binding protein Hfq of Citrobacter koseri (strain ATCC BAA-895 / CDC 4225-83 / SGSC4696).